Here is a 960-residue protein sequence, read N- to C-terminus: Leucine--tRNA ligase (960 aa).

Positions 71–82 (PYPSGAGLHVGH) match the 'HIGH' region motif. Residues 729–733 (KMGKS) carry the 'KMSKS' region motif. Lysine 732 serves as a coordination point for ATP.

The protein belongs to the class-I aminoacyl-tRNA synthetase family.

The protein resides in the cytoplasm. The catalysed reaction is tRNA(Leu) + L-leucine + ATP = L-leucyl-tRNA(Leu) + AMP + diphosphate. The sequence is that of Leucine--tRNA ligase from Corynebacterium diphtheriae (strain ATCC 700971 / NCTC 13129 / Biotype gravis).